A 233-amino-acid chain; its full sequence is Guanylate kinase (233 aa).

Residues 3–184 (GTIFIISAPS…AVEQLRAIVL (182 aa)) enclose the Guanylate kinase-like domain. 10-17 (APSGSGKS) provides a ligand contact to ATP.

Belongs to the guanylate kinase family.

Its subcellular location is the cytoplasm. The catalysed reaction is GMP + ATP = GDP + ADP. Functionally, essential for recycling GMP and indirectly, cGMP. This Koribacter versatilis (strain Ellin345) protein is Guanylate kinase.